The chain runs to 250 residues: 5'-nucleotidase SurE (250 aa).

Positions 8, 9, 39, and 91 each coordinate a divalent metal cation.

This sequence belongs to the SurE nucleotidase family. It depends on a divalent metal cation as a cofactor.

The protein localises to the cytoplasm. The enzyme catalyses a ribonucleoside 5'-phosphate + H2O = a ribonucleoside + phosphate. Nucleotidase that shows phosphatase activity on nucleoside 5'-monophosphates. This Leptospira borgpetersenii serovar Hardjo-bovis (strain L550) protein is 5'-nucleotidase SurE.